Consider the following 206-residue polypeptide: Large ribosomal subunit protein uL4 (206 aa).

A disordered region spans residues 45 to 76; sequence RQGTQSAKTRTEVSGGGIKPWRQKGTGRARQG.

This sequence belongs to the universal ribosomal protein uL4 family. Part of the 50S ribosomal subunit.

Its function is as follows. One of the primary rRNA binding proteins, this protein initially binds near the 5'-end of the 23S rRNA. It is important during the early stages of 50S assembly. It makes multiple contacts with different domains of the 23S rRNA in the assembled 50S subunit and ribosome. Forms part of the polypeptide exit tunnel. This chain is Large ribosomal subunit protein uL4, found in Clostridium acetobutylicum (strain ATCC 824 / DSM 792 / JCM 1419 / IAM 19013 / LMG 5710 / NBRC 13948 / NRRL B-527 / VKM B-1787 / 2291 / W).